A 249-amino-acid chain; its full sequence is ATP-dependent Clp protease proteolytic subunit (249 aa).

The Nucleophile role is filled by Ser107. The active site involves His132. A disordered region spans residues 212 to 249; it reads ESASQDNSLDPDAPDESASQDNSLDPDAPDETRPPKLR.

This sequence belongs to the peptidase S14 family. Component of the chloroplastic Clp protease core complex.

Its subcellular location is the plastid. The protein localises to the chloroplast stroma. It carries out the reaction Hydrolysis of proteins to small peptides in the presence of ATP and magnesium. alpha-casein is the usual test substrate. In the absence of ATP, only oligopeptides shorter than five residues are hydrolyzed (such as succinyl-Leu-Tyr-|-NHMec, and Leu-Tyr-Leu-|-Tyr-Trp, in which cleavage of the -Tyr-|-Leu- and -Tyr-|-Trp bonds also occurs).. Functionally, cleaves peptides in various proteins in a process that requires ATP hydrolysis. Has a chymotrypsin-like activity. Plays a major role in the degradation of misfolded proteins. In Oenothera elata subsp. hookeri (Hooker's evening primrose), this protein is ATP-dependent Clp protease proteolytic subunit.